The sequence spans 119 residues: Large ribosomal subunit protein bL20 (119 aa).

This sequence belongs to the bacterial ribosomal protein bL20 family.

Binds directly to 23S ribosomal RNA and is necessary for the in vitro assembly process of the 50S ribosomal subunit. It is not involved in the protein synthesizing functions of that subunit. The sequence is that of Large ribosomal subunit protein bL20 (rplT) from Geobacillus stearothermophilus (Bacillus stearothermophilus).